The primary structure comprises 68 residues: uncharacterized protein (68 aa).

This is an uncharacterized protein from Rickettsia prowazekii (strain Madrid E).